The following is a 102-amino-acid chain: NADH-quinone oxidoreductase subunit K (102 aa).

The next 3 membrane-spanning stretches (helical) occupy residues 3 to 23 (IGLTHYLTVGAILFGLGAFGI), 31 to 51 (IVLLMAIELMLLAVNINLVAF), and 66 to 86 (FILTVAAAEAAIGLAILVVYF).

This sequence belongs to the complex I subunit 4L family. In terms of assembly, NDH-1 is composed of 14 different subunits. Subunits NuoA, H, J, K, L, M, N constitute the membrane sector of the complex.

It is found in the cell inner membrane. It carries out the reaction a quinone + NADH + 5 H(+)(in) = a quinol + NAD(+) + 4 H(+)(out). NDH-1 shuttles electrons from NADH, via FMN and iron-sulfur (Fe-S) centers, to quinones in the respiratory chain. The immediate electron acceptor for the enzyme in this species is believed to be ubiquinone. Couples the redox reaction to proton translocation (for every two electrons transferred, four hydrogen ions are translocated across the cytoplasmic membrane), and thus conserves the redox energy in a proton gradient. The protein is NADH-quinone oxidoreductase subunit K of Rhodospirillum centenum (strain ATCC 51521 / SW).